Consider the following 432-residue polypeptide: Peptidase B (432 aa).

K196 and D201 together coordinate Mn(2+). The active site involves K208. 3 residues coordinate Mn(2+): D219, D278, and E280. The active site involves R282.

This sequence belongs to the peptidase M17 family. In terms of assembly, homohexamer. Requires Mn(2+) as cofactor.

The protein resides in the cytoplasm. The catalysed reaction is Release of an N-terminal amino acid, Xaa, from a peptide or arylamide. Xaa is preferably Glu or Asp but may be other amino acids, including Leu, Met, His, Cys and Gln.. In terms of biological role, probably plays an important role in intracellular peptide degradation. This is Peptidase B from Vibrio parahaemolyticus serotype O3:K6 (strain RIMD 2210633).